The following is a 333-amino-acid chain: Cytochrome f (333 aa).

A signal peptide spans 1-44; that stretch reads MRNACTRARLTRTARAMVKTLFIAIASVTFFFTSDLALPQSAAA. Heme-binding residues include Tyr-45, Cys-66, Cys-69, and His-70. The helical transmembrane segment at 299-318 threads the bilayer; sequence VGWLIAFVALVMLAQVMLVL.

This sequence belongs to the cytochrome f family. The 4 large subunits of the cytochrome b6-f complex are cytochrome b6, subunit IV (17 kDa polypeptide, PetD), cytochrome f and the Rieske protein, while the 4 small subunits are PetG, PetL, PetM and PetN. The complex functions as a dimer. Requires heme as cofactor.

The protein resides in the cellular thylakoid membrane. Its function is as follows. Component of the cytochrome b6-f complex, which mediates electron transfer between photosystem II (PSII) and photosystem I (PSI), cyclic electron flow around PSI, and state transitions. The sequence is that of Cytochrome f from Trichormus variabilis (strain ATCC 29413 / PCC 7937) (Anabaena variabilis).